We begin with the raw amino-acid sequence, 235 residues long: Thiamine import ATP-binding protein ThiQ (235 aa).

One can recognise an ABC transporter domain in the interval 2-230 (LKLIDITWLY…QASASALLGI (229 aa)). An ATP-binding site is contributed by 32–39 (GPSGAGKS).

Belongs to the ABC transporter superfamily. Thiamine importer (TC 3.A.1.19.1) family. As to quaternary structure, the complex is composed of two ATP-binding proteins (ThiQ), two transmembrane proteins (ThiP) and a solute-binding protein (ThiB).

It is found in the cell inner membrane. It catalyses the reaction thiamine(out) + ATP + H2O = thiamine(in) + ADP + phosphate + H(+). Part of the ABC transporter complex ThiBPQ involved in thiamine import. Responsible for energy coupling to the transport system. Is also involved in thiamine pyrophosphate (TPP) transport. This chain is Thiamine import ATP-binding protein ThiQ, found in Salmonella typhimurium (strain LT2 / SGSC1412 / ATCC 700720).